The following is a 559-amino-acid chain: 5'-AMP-activated protein kinase catalytic subunit alpha-1 (559 aa).

Positions 27-279 (YILGDTLGVG…IKDIREHEWF (253 aa)) constitute a Protein kinase domain. The residue at position 32 (threonine 32) is a Phosphothreonine. ATP is bound by residues 33–41 (LGVGTFGKV) and lysine 56. Aspartate 150 serves as the catalytic Proton acceptor. A Phosphothreonine; by LKB1 and CaMKK2 modification is found at threonine 183. Residues threonine 269 and threonine 355 each carry the phosphothreonine modification. An AIS region spans residues 302-381 (EALKEVCEKF…PERVPFLVAE (80 aa)). Serine 356 is modified (phosphoserine). Serine 360 carries the post-translational modification Phosphoserine; by ULK1. At threonine 368 the chain carries Phosphothreonine; by ULK1. Residue threonine 382 is modified to Phosphothreonine. A Phosphoserine; by ULK1 modification is found at serine 397. Residues serine 467 and serine 486 each carry the phosphoserine modification. A disordered region spans residues 484–536 (AKSGTATPQRSGSISNYRSCQRSDSDAEAQGKPSEVSLTSSVTSLDSSPVDVA). Polar residues predominate over residues 485-505 (KSGTATPQRSGSISNYRSCQR). The residue at position 486 (serine 486) is a Phosphoserine; by ULK1. Position 488 is a phosphothreonine; by ULK1 (threonine 488). Phosphothreonine is present on threonine 490. Phosphoserine occurs at positions 496, 508, 524, and 527. Low complexity predominate over residues 516–535 (PSEVSLTSSVTSLDSSPVDV).

The protein belongs to the protein kinase superfamily. CAMK Ser/Thr protein kinase family. SNF1 subfamily. AMPK is a heterotrimer of an alpha catalytic subunit (PRKAA1 or PRKAA2), a beta (PRKAB1 or PRKAB2) and a gamma non-catalytic subunits (PRKAG1, PRKAG2 or PRKAG3). Interacts with FNIP1 and FNIP2. It depends on Mg(2+) as a cofactor. Ubiquitinated. In terms of processing, phosphorylated at Thr-183 by STK11/LKB1 in complex with STE20-related adapter-alpha (STRADA) pseudo kinase and CAB39. Also phosphorylated at Thr-183 by CAMKK2; triggered by a rise in intracellular calcium ions, without detectable changes in the AMP/ATP ratio. CAMKK1 can also phosphorylate Thr-183, but at a much lower level. Dephosphorylated by protein phosphatase 2A and 2C (PP2A and PP2C). Phosphorylated by ULK1 and ULK2; leading to negatively regulate AMPK activity and suggesting the existence of a regulatory feedback loop between ULK1, ULK2 and AMPK. There is some ambiguity for some phosphosites: Ser-360/Thr-368 and Ser-486/Thr-488. Dephosphorylated by PPM1A and PPM1B. Post-translationally, glycosylated; O-GlcNAcylated by OGT, promoting the AMP-activated protein kinase (AMPK) activity. As to expression, low expression in kidney, liver, lung, heart and brain.

It localises to the cytoplasm. It is found in the nucleus. The catalysed reaction is L-seryl-[protein] + ATP = O-phospho-L-seryl-[protein] + ADP + H(+). The enzyme catalyses L-threonyl-[protein] + ATP = O-phospho-L-threonyl-[protein] + ADP + H(+). It carries out the reaction L-seryl-[acetyl-CoA carboxylase] + ATP = O-phospho-L-seryl-[acetyl-CoA carboxylase] + ADP + H(+). It catalyses the reaction L-seryl-[3-hydroxy-3-methylglutaryl-coenzyme A reductase] + ATP = O-phospho-L-seryl-[3-hydroxy-3-methylglutaryl-coenzyme A reductase] + ADP + H(+). The catalysed reaction is L-seryl-[tau protein] + ATP = O-phospho-L-seryl-[tau protein] + ADP + H(+). The enzyme catalyses L-threonyl-[tau protein] + ATP = O-phospho-L-threonyl-[tau protein] + ADP + H(+). Its activity is regulated as follows. Activated by phosphorylation on Thr-183. Binding of AMP to non-catalytic gamma subunit (PRKAG1, PRKAG2 or PRKAG3) results in allosteric activation, inducing phosphorylation on Thr-183. AMP-binding to gamma subunit also sustains activity by preventing dephosphorylation of Thr-183. ADP also stimulates Thr-183 phosphorylation, without stimulating already phosphorylated AMPK. ATP promotes dephosphorylation of Thr-183, rendering the enzyme inactive. Under physiological conditions AMPK mainly exists in its inactive form in complex with ATP, which is much more abundant than AMP. Selectively inhibited by compound C (6-[4-(2-Piperidin-1-yl-ethoxy)-phenyl)]-3-pyridin-4-yl-pyyrazolo[1,5-a] pyrimidine. Activated by resveratrol, a natural polyphenol present in red wine, and S17834, a synthetic polyphenol. In terms of biological role, catalytic subunit of AMP-activated protein kinase (AMPK), an energy sensor protein kinase that plays a key role in regulating cellular energy metabolism. In response to reduction of intracellular ATP levels, AMPK activates energy-producing pathways and inhibits energy-consuming processes: inhibits protein, carbohydrate and lipid biosynthesis, as well as cell growth and proliferation. AMPK acts via direct phosphorylation of metabolic enzymes, and by longer-term effects via phosphorylation of transcription regulators. Regulates lipid synthesis by phosphorylating and inactivating lipid metabolic enzymes such as ACACA, ACACB, GYS1, HMGCR and LIPE; regulates fatty acid and cholesterol synthesis by phosphorylating acetyl-CoA carboxylase (ACACA and ACACB) and hormone-sensitive lipase (LIPE) enzymes, respectively. Promotes lipolysis of lipid droplets by mediating phosphorylation of isoform 1 of CHKA (CHKalpha2). Regulates insulin-signaling and glycolysis by phosphorylating IRS1, PFKFB2 and PFKFB3. AMPK stimulates glucose uptake in muscle by increasing the translocation of the glucose transporter SLC2A4/GLUT4 to the plasma membrane, possibly by mediating phosphorylation of TBC1D4/AS160. Regulates transcription and chromatin structure by phosphorylating transcription regulators involved in energy metabolism such as CRTC2/TORC2, FOXO3, histone H2B, HDAC5, MEF2C, MLXIPL/ChREBP, EP300, HNF4A, p53/TP53, SREBF1, SREBF2 and PPARGC1A. Acts as a key regulator of glucose homeostasis in liver by phosphorylating CRTC2/TORC2, leading to CRTC2/TORC2 sequestration in the cytoplasm. In response to stress, phosphorylates 'Ser-36' of histone H2B (H2BS36ph), leading to promote transcription. Acts as a key regulator of cell growth and proliferation by phosphorylating FNIP1, TSC2, RPTOR, WDR24 and ATG1/ULK1: in response to nutrient limitation, negatively regulates the mTORC1 complex by phosphorylating RPTOR component of the mTORC1 complex and by phosphorylating and activating TSC2. Also phosphorylates and inhibits GATOR2 subunit WDR24 in response to nutrient limitation, leading to suppress glucose-mediated mTORC1 activation. In response to energetic stress, phosphorylates FNIP1, inactivating the non-canonical mTORC1 signaling, thereby promoting nuclear translocation of TFEB and TFE3, and inducing transcription of lysosomal or autophagy genes. In response to nutrient limitation, promotes autophagy by phosphorylating and activating ATG1/ULK1. In that process, it also activates WDR45/WIPI4. Phosphorylates CASP6, thereby preventing its autoprocessing and subsequent activation. In response to nutrient limitation, phosphorylates transcription factor FOXO3 promoting FOXO3 mitochondrial import. Also acts as a regulator of cellular polarity by remodeling the actin cytoskeleton; probably by indirectly activating myosin. AMPK also acts as a regulator of circadian rhythm by mediating phosphorylation of CRY1, leading to destabilize it. May regulate the Wnt signaling pathway by phosphorylating CTNNB1, leading to stabilize it. Also has tau-protein kinase activity: in response to amyloid beta A4 protein (APP) exposure, activated by CAMKK2, leading to phosphorylation of MAPT/TAU; however the relevance of such data remains unclear in vivo. Also phosphorylates CFTR, EEF2K, KLC1, NOS3 and SLC12A1. Regulates hepatic lipogenesis. Activated via SIRT3, represses sterol regulatory element-binding protein (SREBP) transcriptional activities and ATP-consuming lipogenesis to restore cellular energy balance. Upon stress, regulates mitochondrial fragmentation through phosphorylation of MTFR1L. This Rattus norvegicus (Rat) protein is 5'-AMP-activated protein kinase catalytic subunit alpha-1 (Prkaa1).